Reading from the N-terminus, the 198-residue chain is MRIGVIAIQGNVEEHVEAMKRALGGKGEVVTIKHSGIVPTCDAIVIPGGESTTLCRLAWREGIAQEIIEKARQGMPIWGTCAGLILLASRGDEEVTKTKQQLFGLMDITVNRNAFGRQIDSFEAPLAIAGFDEPFNAVFIRAPAIVSAGQNVKVLAKYDDFIVAARQQNLLVSAFHPELTDDLRFHWYFLEMVPGWKN.

Position 49-51 (49-51) interacts with L-glutamine; it reads GES. C81 functions as the Nucleophile in the catalytic mechanism. Residues R112 and 140-141 contribute to the L-glutamine site; that span reads IR. Catalysis depends on charge relay system residues H176 and E178.

This sequence belongs to the glutaminase PdxT/SNO family. As to quaternary structure, in the presence of PdxS, forms a dodecamer of heterodimers. Only shows activity in the heterodimer.

It catalyses the reaction aldehydo-D-ribose 5-phosphate + D-glyceraldehyde 3-phosphate + L-glutamine = pyridoxal 5'-phosphate + L-glutamate + phosphate + 3 H2O + H(+). It carries out the reaction L-glutamine + H2O = L-glutamate + NH4(+). Its pathway is cofactor biosynthesis; pyridoxal 5'-phosphate biosynthesis. Catalyzes the hydrolysis of glutamine to glutamate and ammonia as part of the biosynthesis of pyridoxal 5'-phosphate. The resulting ammonia molecule is channeled to the active site of PdxS. This Methanocella arvoryzae (strain DSM 22066 / NBRC 105507 / MRE50) protein is Pyridoxal 5'-phosphate synthase subunit PdxT.